We begin with the raw amino-acid sequence, 509 residues long: Probable cytochrome P450 513A1 (509 aa).

Residues 2–19 traverse the membrane as a helical segment; that stretch reads NYLVGLVLIFTIFYFFLQ. C454 serves as a coordination point for heme.

It belongs to the cytochrome P450 family. Heme is required as a cofactor.

The protein localises to the membrane. The polypeptide is Probable cytochrome P450 513A1 (cyp513A1) (Dictyostelium discoideum (Social amoeba)).